The following is a 401-amino-acid chain: MISASDMLAGLTGLGVTTVAGVPCSYLTPLINRVISDRATRYLTVTQEGEAAAVAAGSWLGGGLGCAITQNSGLGNMTNPLTSLLHPARIPAVVISTWRGRPGEKDEPQHHLMGRVTGDLFGLCDMEWSLLPDTPDALRGEFDVCREALARRELPYGFLLPQGVIADEPLDEEAPRSRAGRLVRHARTGPSDAAPTRVAALERLLAELPPAAAVVSTTGKTSRELYTLDDRDQHFYMVGAMGSAATVGLGVALHTPRPVVVVDGDGSALMRLGSLATVAAHAPGNLVHLILDNGVHDSTGGQRTLSSAVDLPAVAAACGYRAVHACGSLDDLTTALAGALATDGPTLIHLPIRPGSLAALGRPKVQPHEVARRFREFATEPWPASAVGSGTRAAAGSAGDR.

Positions 382–401 (WPASAVGSGTRAAAGSAGDR) are disordered. Over residues 384–401 (ASAVGSGTRAAAGSAGDR) the composition is skewed to low complexity.

This sequence belongs to the TPP enzyme family. Thiamine diphosphate serves as cofactor. Requires Mg(2+) as cofactor.

The enzyme catalyses 3-phosphonopyruvate + H(+) = phosphonoacetaldehyde + CO2. The protein operates within secondary metabolite biosynthesis; bialaphos biosynthesis. In terms of biological role, involved in the biosynthesis of phosphinothricin tripeptide (PTT), also known as bialaphos (BA), a natural-product antibiotic and potent herbicide. Catalyzes the decarboxylation of phosphonopyruvate (PnPy) to generate phosphonoacetaldehyde (PnAA). The polypeptide is Phosphonopyruvate decarboxylase (Streptomyces hygroscopicus).